The chain runs to 318 residues: tRNA dimethylallyltransferase (318 aa).

21 to 28 (GPTATGKS) serves as a coordination point for ATP. 23–28 (TATGKS) lines the substrate pocket. Residues 46–49 (DSMQ) are interaction with substrate tRNA.

It belongs to the IPP transferase family. As to quaternary structure, monomer. Mg(2+) is required as a cofactor.

It catalyses the reaction adenosine(37) in tRNA + dimethylallyl diphosphate = N(6)-dimethylallyladenosine(37) in tRNA + diphosphate. Functionally, catalyzes the transfer of a dimethylallyl group onto the adenine at position 37 in tRNAs that read codons beginning with uridine, leading to the formation of N6-(dimethylallyl)adenosine (i(6)A). The protein is tRNA dimethylallyltransferase of Acidothermus cellulolyticus (strain ATCC 43068 / DSM 8971 / 11B).